Here is a 448-residue protein sequence, read N- to C-terminus: Adenylosuccinate synthetase (448 aa).

Residues 22–28 (GDEGKGK) and 50–52 (GHT) contribute to the GTP site. Asp-23 serves as the catalytic Proton acceptor. Mg(2+) contacts are provided by Asp-23 and Gly-50. Residues 23–26 (DEGK), 48–51 (NAGH), Thr-139, Arg-153, Gln-234, Thr-249, and Arg-321 each bind IMP. Residue His-51 is the Proton donor of the active site. Position 317-323 (317-323 (SVTGRPR)) interacts with substrate. GTP contacts are provided by residues Arg-323, 349–351 (KLD), and 431–433 (STG).

Belongs to the adenylosuccinate synthetase family. In terms of assembly, homodimer. The cofactor is Mg(2+).

Its subcellular location is the cytoplasm. The enzyme catalyses IMP + L-aspartate + GTP = N(6)-(1,2-dicarboxyethyl)-AMP + GDP + phosphate + 2 H(+). Its pathway is purine metabolism; AMP biosynthesis via de novo pathway; AMP from IMP: step 1/2. Plays an important role in the de novo pathway of purine nucleotide biosynthesis. Catalyzes the first committed step in the biosynthesis of AMP from IMP. The sequence is that of Adenylosuccinate synthetase from Paraburkholderia xenovorans (strain LB400).